The primary structure comprises 184 residues: Antigen Sm21.7 (184 aa).

The EF-hand domain maps to 37–72 (LDMKQVNEWIALFDVDKDQKITFEEFCRGLGLKQNE). Residues Asp-50, Asp-52, Asp-54, Lys-56, and Glu-61 each coordinate Ca(2+).

The sequence is that of Antigen Sm21.7 (SM21.7) from Schistosoma mansoni (Blood fluke).